Consider the following 508-residue polypeptide: Maturase K (508 aa).

It belongs to the intron maturase 2 family. MatK subfamily.

Its subcellular location is the plastid. The protein resides in the chloroplast. Its function is as follows. Usually encoded in the trnK tRNA gene intron. Probably assists in splicing its own and other chloroplast group II introns. The chain is Maturase K from Coronilla varia (Crown vetch).